The primary structure comprises 215 residues: LysM and putative peptidoglycan-binding domain-containing protein 1 (215 aa).

Residues 37 to 81 (LEHQVQPGDTLQGLALRYGVSMEQIKRANRLYTNDSIFLKKSLYI) form the LysM domain. Polar residues-rich tracts occupy residues 86–103 (GQSDLSDDQNSQEGSETE) and 173–189 (GNRTPSRQNSPQTQQRS). Disordered stretches follow at residues 86-133 (GQSD…PVDF) and 148-203 (AVKK…TRAS).

In Xenopus laevis (African clawed frog), this protein is LysM and putative peptidoglycan-binding domain-containing protein 1 (lysmd1).